The primary structure comprises 141 residues: HTH-type transcriptional repressor NsrR (141 aa).

In terms of domain architecture, HTH rrf2-type spans Q2 to E129. A DNA-binding region (H-T-H motif) is located at residues I28 to R51. Positions 91, 96, and 102 each coordinate [2Fe-2S] cluster.

The cofactor is [2Fe-2S] cluster.

In terms of biological role, nitric oxide-sensitive repressor of genes involved in protecting the cell against nitrosative stress. May require iron for activity. The polypeptide is HTH-type transcriptional repressor NsrR (Shigella boydii serotype 18 (strain CDC 3083-94 / BS512)).